A 676-amino-acid polypeptide reads, in one-letter code: Transcription factor RLM1 (676 aa).

An MADS-box domain is found at R3–F57. Positions S58–D87 form a DNA-binding region, mef2-type. A compositionally biased stretch (polar residues) spans S103–S120. Residues S103–P156 are disordered. At S120 the chain carries Phosphoserine. The segment covering E121 to D134 has biased composition (acidic residues). S164 carries the post-translational modification Phosphoserine. Positions D173–E183 are enriched in basic and acidic residues. 5 disordered regions span residues D173 to L192, I202 to L318, N330 to S424, K472 to L514, and M532 to T631. Residues I260–T276 are compositionally biased toward polar residues. Residues N284–N295 are compositionally biased toward low complexity. Polar residues predominate over residues Y296–V312. Composition is skewed to low complexity over residues S334–S359, S368–S381, and P399–N417. Residues S374 and S377 each carry the phosphoserine modification. Positions K472–L506 are enriched in polar residues. Positions P539–N604 are enriched in low complexity. Polar residues predominate over residues G621–T631.

It belongs to the MEF2 family. As to quaternary structure, can heterodimerize with SPM1. Interacts with KDX1 and SLT2. Post-translationally, phosphorylated by SLT2.

It localises to the nucleus. In terms of biological role, may function as a transcription factor downstream of MPK1 that is subject to activation by the MPK1 mitogen-activated protein kinase pathway. Binds to the DNA sequence 5'-CTA[TA](4)TAG-3'. At least some RML1 target genes are involved in cell wall biosynthesis. The protein is Transcription factor RLM1 (RLM1) of Saccharomyces cerevisiae (strain ATCC 204508 / S288c) (Baker's yeast).